The chain runs to 783 residues: LPS-assembly protein LptD (783 aa).

An N-terminal signal peptide occupies residues 1 to 24 (MSCFSRTFLAASISAALFAPQIQA).

Belongs to the LptD family. In terms of assembly, component of the lipopolysaccharide transport and assembly complex. Interacts with LptE and LptA.

It localises to the cell outer membrane. In terms of biological role, together with LptE, is involved in the assembly of lipopolysaccharide (LPS) at the surface of the outer membrane. The sequence is that of LPS-assembly protein LptD from Vibrio cholerae serotype O1 (strain ATCC 39315 / El Tor Inaba N16961).